The sequence spans 731 residues: 1,4-alpha-glucan branching enzyme GlgB (731 aa).

The active-site Nucleophile is the aspartate 412. The active-site Proton donor is glutamate 465.

The protein belongs to the glycosyl hydrolase 13 family. GlgB subfamily. In terms of assembly, monomer.

The enzyme catalyses Transfers a segment of a (1-&gt;4)-alpha-D-glucan chain to a primary hydroxy group in a similar glucan chain.. It functions in the pathway glycan biosynthesis; glycogen biosynthesis. In terms of biological role, catalyzes the formation of the alpha-1,6-glucosidic linkages in glycogen by scission of a 1,4-alpha-linked oligosaccharide from growing alpha-1,4-glucan chains and the subsequent attachment of the oligosaccharide to the alpha-1,6 position. This is 1,4-alpha-glucan branching enzyme GlgB from Bordetella parapertussis (strain 12822 / ATCC BAA-587 / NCTC 13253).